Reading from the N-terminus, the 161-residue chain is Phosphopantetheine adenylyltransferase (161 aa).

Residue Ser-8 participates in substrate binding. Residues 8–9 and His-16 each bind ATP; that span reads SF. Residues 36-40, Leu-72, and Arg-86 contribute to the substrate site; that span reads ENPRK. ATP is bound by residues 87 to 89, Glu-97, and 122 to 128; these read GLR and FSFISSS. Glu-132 is a substrate binding site.

This sequence belongs to the bacterial CoaD family. Homohexamer. Requires Mg(2+) as cofactor.

Its subcellular location is the cytoplasm. The enzyme catalyses (R)-4'-phosphopantetheine + ATP + H(+) = 3'-dephospho-CoA + diphosphate. Its pathway is cofactor biosynthesis; coenzyme A biosynthesis; CoA from (R)-pantothenate: step 4/5. In terms of biological role, reversibly transfers an adenylyl group from ATP to 4'-phosphopantetheine, yielding dephospho-CoA (dPCoA) and pyrophosphate. The protein is Phosphopantetheine adenylyltransferase of Thermotoga maritima (strain ATCC 43589 / DSM 3109 / JCM 10099 / NBRC 100826 / MSB8).